We begin with the raw amino-acid sequence, 446 residues long: Na(+)-translocating NADH-quinone reductase subunit A (446 aa).

The protein belongs to the NqrA family. As to quaternary structure, composed of six subunits; NqrA, NqrB, NqrC, NqrD, NqrE and NqrF.

The enzyme catalyses a ubiquinone + n Na(+)(in) + NADH + H(+) = a ubiquinol + n Na(+)(out) + NAD(+). In terms of biological role, NQR complex catalyzes the reduction of ubiquinone-1 to ubiquinol by two successive reactions, coupled with the transport of Na(+) ions from the cytoplasm to the periplasm. NqrA to NqrE are probably involved in the second step, the conversion of ubisemiquinone to ubiquinol. The polypeptide is Na(+)-translocating NADH-quinone reductase subunit A (Vibrio atlanticus (strain LGP32) (Vibrio splendidus (strain Mel32))).